The primary structure comprises 189 residues: 2-oxoglutarate synthase subunit KorC (189 aa).

Heterotetramer of the KorA, KorB, KorC and KorD subunits.

The enzyme catalyses 2 oxidized [2Fe-2S]-[ferredoxin] + 2-oxoglutarate + CoA = succinyl-CoA + 2 reduced [2Fe-2S]-[ferredoxin] + CO2 + H(+). This Methanothermobacter thermautotrophicus (strain ATCC 29096 / DSM 1053 / JCM 10044 / NBRC 100330 / Delta H) (Methanobacterium thermoautotrophicum) protein is 2-oxoglutarate synthase subunit KorC (korC).